The following is a 480-amino-acid chain: Na(+)/H(+) antiporter NhaA (480 aa).

Transmembrane regions (helical) follow at residues 34 to 54, 76 to 96, 113 to 133, 144 to 164, 174 to 194, 197 to 217, 223 to 243, 282 to 302, 312 to 332, 350 to 370, and 381 to 401; these read VGGV…NIPA, LSVA…VAGI, AVLP…VYTL, GWAV…AVIG, FLLT…AIFF, RINF…WLLL, GWYV…NSGV, GLAV…GGAL, LGVV…STWL, IFAV…IGEL, and EVKA…TVLL. A disordered region spans residues 454 to 480; that stretch reads AAEKAAAARHGGAEVPGGAGEEDGRPA.

The protein belongs to the NhaA Na(+)/H(+) (TC 2.A.33) antiporter family.

Its subcellular location is the cell membrane. It carries out the reaction Na(+)(in) + 2 H(+)(out) = Na(+)(out) + 2 H(+)(in). In terms of biological role, na(+)/H(+) antiporter that extrudes sodium in exchange for external protons. The protein is Na(+)/H(+) antiporter NhaA of Streptomyces antibioticus.